The primary structure comprises 218 residues: Adenylate kinase (218 aa).

10–15 contributes to the ATP binding site; the sequence is GAGKGT. Residues 30 to 59 form an NMP region; the sequence is STGDMLRAAVKAGTPLGLEAKAIMDAGGLV. Residues Thr31, Arg36, 57–59, 85–88, and Gln92 contribute to the AMP site; these read GLV and GFPR. An LID region spans residues 122–159; sequence GRRVHLASGRTYHVTFNPPKAAGKDDVTGEDLVQRDDD. ATP is bound by residues Arg123 and 132–133; that span reads TY. Arg156 and Arg167 together coordinate AMP. Arg203 lines the ATP pocket.

It belongs to the adenylate kinase family. Monomer.

The protein resides in the cytoplasm. It carries out the reaction AMP + ATP = 2 ADP. It participates in purine metabolism; AMP biosynthesis via salvage pathway; AMP from ADP: step 1/1. In terms of biological role, catalyzes the reversible transfer of the terminal phosphate group between ATP and AMP. Plays an important role in cellular energy homeostasis and in adenine nucleotide metabolism. The chain is Adenylate kinase from Chromobacterium violaceum (strain ATCC 12472 / DSM 30191 / JCM 1249 / CCUG 213 / NBRC 12614 / NCIMB 9131 / NCTC 9757 / MK).